The chain runs to 332 residues: Protein FAM131B (332 aa).

The segment at 1-22 (MDSTSSLHGSSLHRPSTEQTRT) is disordered. Ser-47 is modified (phosphoserine). A disordered region spans residues 95 to 114 (PTIQPQHSHEAVRRDTDAYS). Residues 101–111 (HSHEAVRRDTD) show a composition bias toward basic and acidic residues. A phosphoserine mark is found at Ser-114 and Ser-117. The segment at 221-332 (LGPAFDDSQP…FDEEEGDANN (112 aa)) is disordered. Basic and acidic residues-rich tracts occupy residues 272–281 (PVEEEKRPLA) and 288–302 (AGCR…REDP). Residues Ser-295, Ser-297, and Ser-313 each carry the phosphoserine modification. Phosphothreonine is present on Thr-316. A phosphoserine mark is found at Ser-317, Ser-318, and Ser-322. The span at 323–332 (FDEEEGDANN) shows a compositional bias: acidic residues.

Belongs to the FAM131 family.

This chain is Protein FAM131B (Fam131b), found in Mus musculus (Mouse).